The chain runs to 602 residues: 4-hydroxy-3-methylbut-2-en-1-yl diphosphate synthase (flavodoxin) (602 aa).

Residues Cys508, Cys511, Cys543, and Glu550 each contribute to the [4Fe-4S] cluster site.

The protein belongs to the IspG family. Requires [4Fe-4S] cluster as cofactor.

It carries out the reaction (2E)-4-hydroxy-3-methylbut-2-enyl diphosphate + oxidized [flavodoxin] + H2O + 2 H(+) = 2-C-methyl-D-erythritol 2,4-cyclic diphosphate + reduced [flavodoxin]. The protein operates within isoprenoid biosynthesis; isopentenyl diphosphate biosynthesis via DXP pathway; isopentenyl diphosphate from 1-deoxy-D-xylulose 5-phosphate: step 5/6. Converts 2C-methyl-D-erythritol 2,4-cyclodiphosphate (ME-2,4cPP) into 1-hydroxy-2-methyl-2-(E)-butenyl 4-diphosphate. The protein is 4-hydroxy-3-methylbut-2-en-1-yl diphosphate synthase (flavodoxin) of Chlamydia trachomatis serovar L2b (strain UCH-1/proctitis).